A 119-amino-acid polypeptide reads, in one-letter code: Large ribosomal subunit protein uL22c (119 aa).

Belongs to the universal ribosomal protein uL22 family. As to quaternary structure, part of the 50S ribosomal subunit.

Its subcellular location is the plastid. It is found in the chloroplast. This protein binds specifically to 23S rRNA. Functionally, the globular domain of the protein is located near the polypeptide exit tunnel on the outside of the subunit, while an extended beta-hairpin is found that lines the wall of the exit tunnel in the center of the 70S ribosome. The protein is Large ribosomal subunit protein uL22c (rpl22) of Chlorokybus atmophyticus (Soil alga).